Here is a 398-residue protein sequence, read N- to C-terminus: tRNA(Ile)-lysidine synthase (398 aa).

25 to 30 (SGGVDS) provides a ligand contact to ATP.

This sequence belongs to the tRNA(Ile)-lysidine synthase family.

Its subcellular location is the cytoplasm. It carries out the reaction cytidine(34) in tRNA(Ile2) + L-lysine + ATP = lysidine(34) in tRNA(Ile2) + AMP + diphosphate + H(+). Its function is as follows. Ligates lysine onto the cytidine present at position 34 of the AUA codon-specific tRNA(Ile) that contains the anticodon CAU, in an ATP-dependent manner. Cytidine is converted to lysidine, thus changing the amino acid specificity of the tRNA from methionine to isoleucine. This Francisella tularensis subsp. novicida (strain U112) protein is tRNA(Ile)-lysidine synthase.